The following is a 161-amino-acid chain: Cyclic pyranopterin monophosphate synthase (161 aa).

Residues Met-75–His-77 and Met-115–Glu-116 contribute to the substrate site. The active site involves Asp-130.

Belongs to the MoaC family. In terms of assembly, homohexamer; trimer of dimers.

It carries out the reaction (8S)-3',8-cyclo-7,8-dihydroguanosine 5'-triphosphate = cyclic pyranopterin phosphate + diphosphate. Its pathway is cofactor biosynthesis; molybdopterin biosynthesis. Functionally, catalyzes the conversion of (8S)-3',8-cyclo-7,8-dihydroguanosine 5'-triphosphate to cyclic pyranopterin monophosphate (cPMP). This Bacillus mycoides (strain KBAB4) (Bacillus weihenstephanensis) protein is Cyclic pyranopterin monophosphate synthase.